The primary structure comprises 192 residues: MIVIVDYGLGNISNVKRAIEHLGYEVVVSNKQNIIDQAETIILPGVGHFKDAMSEIKRLNLDAILAKNTDKKMIGICLGMQLMYEHSDEGDASGLGFIPGNISRIQTEYPVPHLGWNNLVSKHPMLNQDVYFVHSYQAPMSENVIAYAQYGTDIPAIVQFNNYIGIQFHPEKSGTYGLQILRQAIQGGFIND.

One can recognise a Glutamine amidotransferase type-1 domain in the interval 1 to 192 (MIVIVDYGLG…QAIQGGFIND (192 aa)). Catalysis depends on Cys-77, which acts as the Nucleophile. Active-site residues include His-169 and Glu-171.

As to quaternary structure, heterodimer of HisH and HisF.

The protein localises to the cytoplasm. The enzyme catalyses 5-[(5-phospho-1-deoxy-D-ribulos-1-ylimino)methylamino]-1-(5-phospho-beta-D-ribosyl)imidazole-4-carboxamide + L-glutamine = D-erythro-1-(imidazol-4-yl)glycerol 3-phosphate + 5-amino-1-(5-phospho-beta-D-ribosyl)imidazole-4-carboxamide + L-glutamate + H(+). It catalyses the reaction L-glutamine + H2O = L-glutamate + NH4(+). It participates in amino-acid biosynthesis; L-histidine biosynthesis; L-histidine from 5-phospho-alpha-D-ribose 1-diphosphate: step 5/9. Functionally, IGPS catalyzes the conversion of PRFAR and glutamine to IGP, AICAR and glutamate. The HisH subunit catalyzes the hydrolysis of glutamine to glutamate and ammonia as part of the synthesis of IGP and AICAR. The resulting ammonia molecule is channeled to the active site of HisF. This is Imidazole glycerol phosphate synthase subunit HisH from Staphylococcus aureus (strain bovine RF122 / ET3-1).